Consider the following 483-residue polypeptide: NADH-quinone oxidoreductase subunit N (483 aa).

The next 13 membrane-spanning stretches (helical) occupy residues 7 to 27 (AILT…LGAV), 33 to 53 (ALAS…AFYI), 76 to 96 (FAKI…QDYM), 108 to 128 (VLII…DLIA), 161 to 181 (FVLG…AYGF), 196 to 216 (GGDM…GLAF), 235 to 255 (PTPI…ALFA), 272 to 292 (IVAF…IGQT), 297 to 317 (LMAY…SAGT), 323 to 343 (AMLI…AFIL), 369 to 389 (ALAI…LGFF), 402 to 422 (GLVW…FYYI), and 442 to 462 (MGLV…LGWV).

Belongs to the complex I subunit 2 family. As to quaternary structure, NDH-1 is composed of 14 different subunits. Subunits NuoA, H, J, K, L, M, N constitute the membrane sector of the complex.

The protein localises to the cell inner membrane. It carries out the reaction a quinone + NADH + 5 H(+)(in) = a quinol + NAD(+) + 4 H(+)(out). NDH-1 shuttles electrons from NADH, via FMN and iron-sulfur (Fe-S) centers, to quinones in the respiratory chain. The immediate electron acceptor for the enzyme in this species is believed to be ubiquinone. Couples the redox reaction to proton translocation (for every two electrons transferred, four hydrogen ions are translocated across the cytoplasmic membrane), and thus conserves the redox energy in a proton gradient. The polypeptide is NADH-quinone oxidoreductase subunit N (Jannaschia sp. (strain CCS1)).